The chain runs to 293 residues: tRNA-cytidine(32) 2-sulfurtransferase (293 aa).

The PP-loop motif signature appears at 62-67; sequence SGGKDS. 3 residues coordinate [4Fe-4S] cluster: Cys-137, Cys-140, and Cys-228.

This sequence belongs to the TtcA family. As to quaternary structure, homodimer. Mg(2+) is required as a cofactor. [4Fe-4S] cluster serves as cofactor.

Its subcellular location is the cytoplasm. The catalysed reaction is cytidine(32) in tRNA + S-sulfanyl-L-cysteinyl-[cysteine desulfurase] + AH2 + ATP = 2-thiocytidine(32) in tRNA + L-cysteinyl-[cysteine desulfurase] + A + AMP + diphosphate + H(+). It participates in tRNA modification. Its function is as follows. Catalyzes the ATP-dependent 2-thiolation of cytidine in position 32 of tRNA, to form 2-thiocytidine (s(2)C32). The sulfur atoms are provided by the cysteine/cysteine desulfurase (IscS) system. The protein is tRNA-cytidine(32) 2-sulfurtransferase of Brucella abortus (strain S19).